The chain runs to 237 residues: Orotidine 5'-phosphate decarboxylase (237 aa).

Residues D10, K33, 60-69 (DLKLHDIPNT), T123, R185, Q194, G214, and R215 contribute to the substrate site. The Proton donor role is filled by K62.

This sequence belongs to the OMP decarboxylase family. Type 1 subfamily. As to quaternary structure, homodimer.

The enzyme catalyses orotidine 5'-phosphate + H(+) = UMP + CO2. The protein operates within pyrimidine metabolism; UMP biosynthesis via de novo pathway; UMP from orotate: step 2/2. Catalyzes the decarboxylation of orotidine 5'-monophosphate (OMP) to uridine 5'-monophosphate (UMP). The protein is Orotidine 5'-phosphate decarboxylase of Enterococcus faecalis (strain ATCC 700802 / V583).